The sequence spans 934 residues: Complement component C6 (934 aa).

Residues 1–21 (MTRHLTLCFILLVMLIDKSEA) form the signal peptide. 11 disulfides stabilise this stretch: Cys-22–Cys-61, Cys-24–Cys-65, Cys-35–Cys-73, Cys-39–Cys-78, Cys-82–Cys-117, Cys-93–Cys-127, Cys-96–Cys-133, Cys-140–Cys-151, Cys-146–Cys-164, Cys-158–Cys-173, and Cys-180–Cys-218. TSP type-1 domains are found at residues 22–79 (CFCD…QTCP) and 81–134 (NCVL…KLCK). One can recognise an LDL-receptor class A domain in the interval 138–175 (TNCKNKFLCDSGRCIPSKLECNGENDCGDNSDERNCGR). Residues Leu-156, Asn-159, Glu-161, Asp-163, Asp-169, and Glu-170 each coordinate Ca(2+). Residues 176–522 (TKPVCTRIYT…EYAAKFDPCQ (347 aa)) form the MACPF domain. Residues 278-290 (FFPIPIFHFSEKN) form a beta stranded membrane-spanning segment. A glycan (N-linked (GlcNAc...) asparagine) is linked at Asn-324. 16 cysteine pairs are disulfide-bonded: Cys-399/Cys-420, Cys-499/Cys-623, Cys-521/Cys-570, Cys-523/Cys-539, Cys-526/Cys-541, Cys-543/Cys-552, Cys-577/Cys-611, Cys-589/Cys-601, Cys-644/Cys-686, Cys-672/Cys-699, Cys-704/Cys-746, Cys-732/Cys-761, Cys-773/Cys-823, Cys-784/Cys-801, Cys-786/Cys-837, and Cys-793/Cys-816. The beta stranded transmembrane segment at 402-415 (YETKKLKFLYMEIH) threads the bilayer. In terms of domain architecture, EGF-like spans 523 to 553 (CAPCPNNGRPRLSGTECLCVCQSGTYGENCE). One can recognise a TSP type-1 3 domain in the interval 565-612 (DGNWGCWSSWSACNAAYRRSRTRECNNPAPQRGGQSCGGKDQQEEDCT). CCP regions lie at residues 611 to 688 (CTVS…RCLP) and 689 to 765 (DRTW…EQAI). Sushi domains lie at 642–701 (SGCS…ECQR) and 702–763 (TSCL…TCEQ). The tract at residues 642–934 (SGCSQPPLPE…EILNPGRCPD (293 aa)) is C5b-binding domain. Positions 766–840 (LTKSKDLCPP…FVHSGSCQEG (75 aa)) are factor I module (FIM) 1. Residues 785–839 (ICMSPEEDCSAYSEDLCIFDGGSSQYFTSSACKFLAGKCLNNTQSHFVHSGSCQE) form the Kazal-like 1 domain. 3 N-linked (GlcNAc...) asparagine glycosylation sites follow: Asn-825, Asn-855, and Asn-872. The segment at 858-934 (KRVSCGYNTC…EILNPGRCPD (77 aa)) is factor I module (FIM) 2. 5 disulfide bridges follow: Cys-862–Cys-873, Cys-867–Cys-919, Cys-880–Cys-897, Cys-882–Cys-932, and Cys-888–Cys-912. The 59-residue stretch at 876-934 (HTSNCVCLLPPQCSKDENQLYCVKIGSSMREKTVNICTLGAVRCANIKVEILNPGRCPD) folds into the Kazal-like 2 domain.

It belongs to the complement C6/C7/C8/C9 family. Component of the membrane attack complex (MAC), composed of complement C5b, C6, C7, C8A, C8B, C8G and multiple copies of the pore-forming subunit C9. All cysteine residues are assumed to be cross-linked to one another. Individual modules containing an even number of conserved cysteine residues are supposed to have disulfide linkages only within the same module.

Its subcellular location is the secreted. It localises to the target cell membrane. Membrane attack complex (MAC) assembly is inhibited by CD59, thereby protecting self-cells from damage during complement activation. MAC assembly is also inhibited by clusterin (CLU) chaperones that inhibit polymerization of C9. In terms of biological role, component of the membrane attack complex (MAC), a multiprotein complex activated by the complement cascade, which inserts into a target cell membrane and forms a pore, leading to target cell membrane rupture and cell lysis. The MAC is initiated by proteolytic cleavage of C5 into complement C5b in response to the classical, alternative, lectin and GZMK complement pathways. The complement pathways consist in a cascade of proteins that leads to phagocytosis and breakdown of pathogens and signaling that strengthens the adaptive immune system. Together with component C5b, involved in MAC complex assembly: complement C5b and C6 associate with the outer leaflet of target cell membrane, reducing the energy for membrane bending. The protein is Complement component C6 of Mus musculus (Mouse).